The chain runs to 109 residues: Nucleoid-associated protein PM0205 (109 aa).

This sequence belongs to the YbaB/EbfC family. Homodimer.

It localises to the cytoplasm. Its subcellular location is the nucleoid. Binds to DNA and alters its conformation. May be involved in regulation of gene expression, nucleoid organization and DNA protection. The sequence is that of Nucleoid-associated protein PM0205 from Pasteurella multocida (strain Pm70).